Here is a 152-residue protein sequence, read N- to C-terminus: Melatonin receptor type 1B (152 aa).

Over 1–12 the chain is Cytoplasmic; sequence HSFVYEKLFSLW. A helical transmembrane segment spans residues 13–33; the sequence is NTILYVCLIWTLTVVATVPNF. Residues 34–57 lie on the Extracellular side of the membrane; sequence FVGSLEYDPRIYSCTFVQTVSSSY. A helical membrane pass occupies residues 58–78; it reads TITVVVIHFILPITVVTFCYL. Topologically, residues 79–110 are cytoplasmic; the sequence is RIWILVIQVRRKVKSEFKPRMKQSDFRNFLTM. A helical membrane pass occupies residues 111-131; it reads FVVFVIFAFCWAPLNFIGLAV. Topologically, residues 132–144 are extracellular; it reads SINPTEVAPKIPE. The chain crosses the membrane as a helical span at residues 145–152; it reads WLFVVSYF.

This sequence belongs to the G-protein coupled receptor 1 family.

The protein resides in the cell membrane. Functionally, high affinity receptor for melatonin. The activity of this receptor is mediated by pertussis toxin sensitive G proteins that inhibits adenylate cyclase activity. The chain is Melatonin receptor type 1B (mtnr1b) from Xenopus laevis (African clawed frog).